The chain runs to 55 residues: Large ribosomal subunit protein bL32c (55 aa).

It belongs to the bacterial ribosomal protein bL32 family.

The protein localises to the plastid. It localises to the chloroplast. In Daucus carota (Wild carrot), this protein is Large ribosomal subunit protein bL32c.